The primary structure comprises 288 residues: Protein CREG2 (288 aa).

An N-terminal signal peptide occupies residues 1–31 (MSLSGRERPAWPGSRLSWLLCCSALLSPAAG). A disordered region spans residues 78–100 (AHKEDTHLRPRGSARARPAPAAR). The N-linked (GlcNAc...) asparagine glycan is linked to asparagine 164.

This sequence belongs to the CREG family. Brain specific.

It localises to the secreted. In Mus musculus (Mouse), this protein is Protein CREG2 (Creg2).